Here is a 370-residue protein sequence, read N- to C-terminus: MSLHQFLLEPITCHAWNRDRTQIALSPNNHEVHIYKKNGGQWVKAHELKEHNGHITGIDWAPKSDRIVTCGADRNAYVWSQKDGVWKPTLVILRINRAATFVKWSPLENKFAVGSGARLISVCYFESENDWWVSKHIKKPIRSTVLSLDWHPNNVLLAAGSCDFKCRVFSAYIKEVDEKPASTPWGSKMPFGQLMSEFGGSGTGGWVHGVSFSASGSRLAWVSHDSTVSVADASKSVQVSTLKTEFLPLLSVSFVSENSVVAAGHDCCPMLFNYDDRGCLTFVSKLDIPKQSIQRNMSAMERFRNMDKRATTEDRNTALETLHQNSITQVSIYEVDKQDCRKFCTTGIDGAMTIWDFKTLESSIQGLRIM.

WD repeat units follow at residues phenylalanine 6 to alanine 45, glutamate 50 to threonine 89, proline 140 to lysine 179, glycine 202 to threonine 241, threonine 244 to serine 284, and leucine 322 to glutamine 365.

This sequence belongs to the WD repeat ARPC1 family. In terms of assembly, probable component of the Arp2/3 complex in which it may replace ARPC1B.

Its subcellular location is the cytoplasm. It is found in the cytoskeleton. The protein localises to the nucleus. Functionally, probably functions as a component of the Arp2/3 complex which is involved in regulation of actin polymerization and together with an activating nucleation-promoting factor (NPF) mediates the formation of branched actin networks. In addition to its role in the cytoplasmic cytoskeleton, the Arp2/3 complex also promotes actin polymerization in the nucleus, thereby regulating gene transcription and repair of damaged DNA. This is Actin-related protein 2/3 complex subunit 1A (ARPC1A) from Bos taurus (Bovine).